The chain runs to 986 residues: Probable ATP-dependent RNA helicase ddx42 (986 aa).

3 disordered regions span residues 1–149 (MSKR…DEDD), 165–192 (AAID…DIDN), and 206–252 (QLAN…IEPL). The span at 29–82 (SNINNNNNSNNNNNNNNNNNNNNNNNNNKNNIGTGINLNIKNNNNINNNNNKSG) shows a compositional bias: low complexity. Polar residues predominate over residues 105 to 117 (PPKSSMTTLNKSP). Positions 119-137 (NFENASSNNNNNNNNNNQE) are enriched in low complexity. The segment covering 217–236 (DDDVDYSSLDDDDGYFDDEE) has biased composition (acidic residues). Residues 305 to 333 (TSFGHYGFDDILLQAIAKQSIETPTPIQK) carry the Q motif motif. In terms of domain architecture, Helicase ATP-binding spans 336-511 (IPIALSGRDL…RTILSDPIKI (176 aa)). ATP is bound at residue 349–356 (AKTGSGKT). Positions 459–462 (DEAD) match the DEAD box motif. The Helicase C-terminal domain maps to 522-684 (DITQIVQVLK…FVPPELIDVA (163 aa)). The interval 688–986 (PHFKRERGGG…FNQRSQYNRR (299 aa)) is disordered. The span at 696–723 (GGGGGSNRGRGRGGGGVGYRRNSRGGGV) shows a compositional bias: gly residues. 2 stretches are compositionally biased toward low complexity: residues 753–764 (NPNNTDNSEINN) and 771–978 (NNEN…NNFN).

It belongs to the DEAD box helicase family. DDX42 subfamily.

It is found in the nucleus. The enzyme catalyses ATP + H2O = ADP + phosphate + H(+). In terms of biological role, probable ATP-dependent RNA helicase which may bind to partially double-stranded RNAs (dsRNAs) in order to unwind RNA secondary structures. This Dictyostelium discoideum (Social amoeba) protein is Probable ATP-dependent RNA helicase ddx42 (ddx42).